The chain runs to 23 residues: uncharacterized protein (23 aa).

A helical transmembrane segment spans residues 3–23; the sequence is YFFMGISFMVIVWAGTFALMI.

The protein resides in the cell inner membrane. This is an uncharacterized protein from Escherichia coli (strain K12).